We begin with the raw amino-acid sequence, 483 residues long: Sphingomyelin synthase-related 1 (483 aa).

The next 3 membrane-spanning stretches (helical) occupy residues 182–202 (LIAF…MVLV), 230–250 (FDMC…VLFF), and 261–281 (MFSL…ITSL). The active site involves His-330. Residues 349 to 369 (WTGLHTFTWVLNCFAIFLILA) traverse the membrane as a helical segment. Residues His-373 and Asp-377 contribute to the active site. The helical transmembrane segment at 376 to 396 (IDVFIAFYISSRMFLYYHAYA) threads the bilayer. The Cytoplasmic portion of the chain corresponds to 397–483 (YNHAGITATD…NSKNHTKKHN (87 aa)). Basic and acidic residues predominate over residues 450-461 (EPKITPKSDSSR). The tract at residues 450–483 (EPKITPKSDSSRKRSSVVAAKQNGNSKNHTKKHN) is disordered.

The protein belongs to the sphingomyelin synthase family.

It is found in the membrane. This is Sphingomyelin synthase-related 1 from Caenorhabditis elegans.